Reading from the N-terminus, the 209-residue chain is Orotate phosphoribosyltransferase (209 aa).

5-phospho-alpha-D-ribose 1-diphosphate-binding positions include arginine 96, lysine 100, histidine 102, and 122–130 (EDLISTGGS). Serine 126 serves as a coordination point for orotate.

This sequence belongs to the purine/pyrimidine phosphoribosyltransferase family. PyrE subfamily. In terms of assembly, homodimer. Requires Mg(2+) as cofactor.

It carries out the reaction orotidine 5'-phosphate + diphosphate = orotate + 5-phospho-alpha-D-ribose 1-diphosphate. The protein operates within pyrimidine metabolism; UMP biosynthesis via de novo pathway; UMP from orotate: step 1/2. Catalyzes the transfer of a ribosyl phosphate group from 5-phosphoribose 1-diphosphate to orotate, leading to the formation of orotidine monophosphate (OMP). The chain is Orotate phosphoribosyltransferase from Listeria monocytogenes serovar 1/2a (strain ATCC BAA-679 / EGD-e).